The chain runs to 541 residues: Methyl-accepting chemotaxis protein PcaY (541 aa).

At 1–10 (MLANLKIRTG) the chain is on the cytoplasmic side. Residues 11–31 (MFWVLSLFSLTLLFSTASAWW) form a helical membrane-spanning segment. The Periplasmic segment spans residues 32–189 (AAVGSDQQIT…ESDRRLARAQ (158 aa)). The segment at 35–187 (GSDQQITELD…MLESDRRLAR (153 aa)) is ligand-binding domain. A helical membrane pass occupies residues 190–210 (LLSLCLLGMTVVLAVLCWAFI). The Cytoplasmic segment spans residues 211–541 (AQRVLHPLRE…MTALVGRFKV (331 aa)). In terms of domain architecture, HAMP spans 212 to 264 (QRVLHPLREAGGHFRRIASGDLSVPVQGQGNNEIGQLFHELQRMQQSQRDTLG). One can recognise a Methyl-accepting transducer domain in the interval 269 to 505 (CARQLDAAAS…EVDRNLLNIR (237 aa)). Residues 322 to 341 (TSQTTSESNQLAAQSRRQVS) form a disordered region.

It belongs to the methyl-accepting chemotaxis (MCP) protein family.

The protein localises to the cell inner membrane. Its function is as follows. Chemotactic-signal transducers respond to changes in the concentration of attractants and repellents in the environment, transduce a signal from the outside to the inside of the cell, and facilitate sensory adaptation through the variation of the level of methylation. PcaY is responsible for the detection of multiple aromatic and hydroaromatic compounds that are metabolized through the beta-ketoadipate catabolic pathway, including vanillin, vanillate, 4-hydroxybenzoate (4-HBA), benzoate and protocatechuate. It also senses several nonmetabolizable aromatic compounds. The protein is Methyl-accepting chemotaxis protein PcaY of Pseudomonas putida (strain ATCC 700007 / DSM 6899 / JCM 31910 / BCRC 17059 / LMG 24140 / F1).